Reading from the N-terminus, the 73-residue chain is Small ribosomal subunit protein eS27 (73 aa).

Positions 28, 31, 47, and 50 each coordinate Zn(2+). A C4-type zinc finger spans residues 28–50 (CVDCGNEQIIFGNASTEVKCHIC).

Belongs to the eukaryotic ribosomal protein eS27 family. In terms of assembly, part of the 30S ribosomal subunit. The cofactor is Zn(2+).

The chain is Small ribosomal subunit protein eS27 from Methanopyrus kandleri (strain AV19 / DSM 6324 / JCM 9639 / NBRC 100938).